Here is a 268-residue protein sequence, read N- to C-terminus: Mediator of RNA polymerase II transcription subunit 18 (268 aa).

Belongs to the Mediator complex subunit 18 family. Component of the Mediator complex.

The protein resides in the nucleus. Its function is as follows. Component of the Mediator complex, a coactivator involved in the regulated transcription of nearly all RNA polymerase II-dependent genes. Mediator functions as a bridge to convey information from gene-specific regulatory proteins to the basal RNA polymerase II transcription machinery. Mediator is recruited to promoters by direct interactions with regulatory proteins and serves as a scaffold for the assembly of a functional preinitiation complex with RNA polymerase II and the general transcription factors. This Neosartorya fischeri (strain ATCC 1020 / DSM 3700 / CBS 544.65 / FGSC A1164 / JCM 1740 / NRRL 181 / WB 181) (Aspergillus fischerianus) protein is Mediator of RNA polymerase II transcription subunit 18 (srb5).